The chain runs to 423 residues: Haloacid dehalogenase-like hydrolase domain-containing 5 (423 aa).

The N-terminal stretch at 1-23 (MAAWGCVAALGAARGLCWRAARA) is a signal peptide.

This sequence belongs to the HAD-like hydrolase superfamily. As to expression, widely expressed.

This Homo sapiens (Human) protein is Haloacid dehalogenase-like hydrolase domain-containing 5.